The following is a 498-amino-acid chain: ATP synthase subunit beta, chloroplastic (498 aa).

172-179 (GGAGVGKT) lines the ATP pocket.

It belongs to the ATPase alpha/beta chains family. In terms of assembly, F-type ATPases have 2 components, CF(1) - the catalytic core - and CF(0) - the membrane proton channel. CF(1) has five subunits: alpha(3), beta(3), gamma(1), delta(1), epsilon(1). CF(0) has four main subunits: a(1), b(1), b'(1) and c(9-12).

The protein localises to the plastid. It is found in the chloroplast thylakoid membrane. It catalyses the reaction ATP + H2O + 4 H(+)(in) = ADP + phosphate + 5 H(+)(out). Produces ATP from ADP in the presence of a proton gradient across the membrane. The catalytic sites are hosted primarily by the beta subunits. This Balaka seemannii protein is ATP synthase subunit beta, chloroplastic.